Consider the following 343-residue polypeptide: Heat-inducible transcription repressor HrcA (343 aa).

It belongs to the HrcA family.

Functionally, negative regulator of class I heat shock genes (grpE-dnaK-dnaJ and groELS operons). Prevents heat-shock induction of these operons. This Mycolicibacterium vanbaalenii (strain DSM 7251 / JCM 13017 / BCRC 16820 / KCTC 9966 / NRRL B-24157 / PYR-1) (Mycobacterium vanbaalenii) protein is Heat-inducible transcription repressor HrcA.